The following is a 259-amino-acid chain: Phosphate import ATP-binding protein PstB 1 (259 aa).

One can recognise an ABC transporter domain in the interval 13 to 254 (IETKDVDLFY…PAEKETEDYI (242 aa)). 45-52 (GPSGCGKS) contacts ATP.

Belongs to the ABC transporter superfamily. Phosphate importer (TC 3.A.1.7) family. As to quaternary structure, the complex is composed of two ATP-binding proteins (PstB), two transmembrane proteins (PstC and PstA) and a solute-binding protein (PstS).

It is found in the cell membrane. The enzyme catalyses phosphate(out) + ATP + H2O = ADP + 2 phosphate(in) + H(+). Functionally, part of the ABC transporter complex PstSACB involved in phosphate import. Responsible for energy coupling to the transport system. This chain is Phosphate import ATP-binding protein PstB 1, found in Listeria innocua serovar 6a (strain ATCC BAA-680 / CLIP 11262).